We begin with the raw amino-acid sequence, 464 residues long: tRNA-2-methylthio-N(6)-dimethylallyladenosine synthase (464 aa).

The MTTase N-terminal domain occupies 5 to 122; that stretch reads RKLYVKSFGC…LPEMLARVRD (118 aa). Residues Cys14, Cys50, Cys85, Cys163, Cys167, and Cys170 each coordinate [4Fe-4S] cluster. The Radical SAM core domain occupies 149-383; sequence KKRGPTAFVT…VLEASKTAFD (235 aa). One can recognise a TRAM domain in the interval 384–446; sequence RACMGRRFDI…PNSLAGQVVD (63 aa).

Belongs to the methylthiotransferase family. MiaB subfamily. In terms of assembly, monomer. It depends on [4Fe-4S] cluster as a cofactor.

The protein resides in the cytoplasm. It carries out the reaction N(6)-dimethylallyladenosine(37) in tRNA + (sulfur carrier)-SH + AH2 + 2 S-adenosyl-L-methionine = 2-methylsulfanyl-N(6)-dimethylallyladenosine(37) in tRNA + (sulfur carrier)-H + 5'-deoxyadenosine + L-methionine + A + S-adenosyl-L-homocysteine + 2 H(+). Catalyzes the methylthiolation of N6-(dimethylallyl)adenosine (i(6)A), leading to the formation of 2-methylthio-N6-(dimethylallyl)adenosine (ms(2)i(6)A) at position 37 in tRNAs that read codons beginning with uridine. The polypeptide is tRNA-2-methylthio-N(6)-dimethylallyladenosine synthase (Azorhizobium caulinodans (strain ATCC 43989 / DSM 5975 / JCM 20966 / LMG 6465 / NBRC 14845 / NCIMB 13405 / ORS 571)).